The sequence spans 96 residues: Protein Vpr (96 aa).

A homooligomerization region spans residues 1-42 (MEQAPEDQGPQREPYNEWTLELLEELKREAVRHFPRPWLHGL). Phosphoserine; by host occurs at positions 79, 94, and 96.

This sequence belongs to the HIV-1 VPR protein family. In terms of assembly, homooligomer, may form homodimer. Interacts with p6-gag region of the Pr55 Gag precursor protein through a (Leu-X-X)4 motif near the C-terminus of the P6gag protein. Interacts with host UNG. May interact with host RAD23A/HHR23A. Interacts with host VPRBP/DCAF1, leading to hijack the CUL4A-RBX1-DDB1-DCAF1/VPRBP complex, mediating ubiquitination of host proteins such as TERT and ZGPAT and arrest of the cell cycle in G2 phase. Phosphorylated on several residues by host. These phosphorylations regulate VPR activity for the nuclear import of the HIV-1 pre-integration complex.

Its subcellular location is the virion. The protein resides in the host nucleus. The protein localises to the host extracellular space. During virus replication, may deplete host UNG protein, and incude G2-M cell cycle arrest. Acts by targeting specific host proteins for degradation by the 26S proteasome, through association with the cellular CUL4A-DDB1 E3 ligase complex by direct interaction with host VPRPB/DCAF-1. Cell cycle arrest reportedly occurs within hours of infection and is not blocked by antiviral agents, suggesting that it is initiated by the VPR carried into the virion. Additionally, VPR induces apoptosis in a cell cycle dependent manner suggesting that these two effects are mechanistically linked. Detected in the serum and cerebrospinal fluid of AIDS patient, VPR may also induce cell death to bystander cells. Functionally, during virus entry, plays a role in the transport of the viral pre-integration (PIC) complex to the host nucleus. This function is crucial for viral infection of non-dividing macrophages. May act directly at the nuclear pore complex, by binding nucleoporins phenylalanine-glycine (FG)-repeat regions. The polypeptide is Protein Vpr (Human immunodeficiency virus type 1 group M subtype C (isolate 92BR025) (HIV-1)).